The primary structure comprises 2376 residues: MAG2-interacting protein 2 (2376 aa).

In terms of assembly, forms a complex with MAG2, ZW10/MIP1 and MIP3 on the endoplasmic reticulum.

It is found in the endoplasmic reticulum membrane. Required for proper maturation of seed storage proteins. Forms a complex with MAG2, ZW10/MIP1 and MIP3 on the endoplasmic reticulum that may be responsible for efficient transport of seed storage proteins. This chain is MAG2-interacting protein 2, found in Arabidopsis thaliana (Mouse-ear cress).